We begin with the raw amino-acid sequence, 102 residues long: NADH-quinone oxidoreductase subunit K 1 (102 aa).

Helical transmembrane passes span 5–25 (LYEV…CVVA), 30–50 (VIMM…TFVG), and 62–82 (VFSL…LAMV).

It belongs to the complex I subunit 4L family. NDH-1 is composed of 14 different subunits. Subunits NuoA, H, J, K, L, M, N constitute the membrane sector of the complex.

It localises to the cell inner membrane. It catalyses the reaction a quinone + NADH + 5 H(+)(in) = a quinol + NAD(+) + 4 H(+)(out). Its function is as follows. NDH-1 shuttles electrons from NADH, via FMN and iron-sulfur (Fe-S) centers, to quinones in the respiratory chain. The immediate electron acceptor for the enzyme in this species is believed to be ubiquinone. Couples the redox reaction to proton translocation (for every two electrons transferred, four hydrogen ions are translocated across the cytoplasmic membrane), and thus conserves the redox energy in a proton gradient. This is NADH-quinone oxidoreductase subunit K 1 from Geobacter sp. (strain M21).